The chain runs to 467 residues: Protein PHOSPHATE STARVATION RESPONSE 3 (467 aa).

The disordered stretch occupies residues 227-266; the sequence is MSLPVSSCSDQEDLQDARSPAKVQLSSSRSSSGTASCNKP. The 61-residue stretch at 262-322 folds into the HTH myb-type domain; that stretch reads SCNKPRLRWT…HLQKYRLAKY (61 aa). A DNA-binding region (H-T-H motif) is located at residues 293–318; the sequence is PKGVLKLMKVEGLTIYHIKSHLQKYR. Residues 327 to 337 show a composition bias toward basic and acidic residues; sequence KEDKKQEEKKT. 2 disordered regions span residues 327 to 353 and 400 to 467; these read KEDK…KSAQ and RESI…VHDE. Residues 402–412 show a composition bias toward polar residues; the sequence is SISSMTSTTEG. Composition is skewed to basic and acidic residues over residues 419-428 and 438-467; these read PMEKTEDKAE and RITD…VHDE.

Its subcellular location is the nucleus. Functionally, transcription factor involved in phosphate starvation signaling. Binds to P1BS, an imperfect palindromic sequence 5'-GNATATNC-3', to promote the expression of inorganic phosphate (Pi) starvation-responsive genes. Functionally redundant with PHR1 and PHR2 in regulating Pi starvation response and Pi homeostasis. In Oryza sativa subsp. indica (Rice), this protein is Protein PHOSPHATE STARVATION RESPONSE 3.